The chain runs to 311 residues: Putative ankyrin repeat protein RF_0923 (311 aa).

ANK repeat units follow at residues 42-71 (IDNT…EQAI), 77-106 (NGNT…PQAI), 112-141 (NGNT…PQAI), 147-176 (NGNT…EQAI), and 182-213 (KGCT…AINH).

The sequence is that of Putative ankyrin repeat protein RF_0923 from Rickettsia felis (strain ATCC VR-1525 / URRWXCal2) (Rickettsia azadi).